A 517-amino-acid chain; its full sequence is L-amino-acid oxidase (517 aa).

The N-terminal stretch at 1–19 (MNVFSIFSLVFLAAFGSCA) is a signal peptide. Cysteines 29 and 192 form a disulfide. Residues 62–63 (MA), 82–83 (EA), Arg-90, and 106–109 (GPMR) each bind FAD. Arg-109 provides a ligand contact to substrate. N-linked (GlcNAc...) asparagine glycosylation is present at Asn-191. FAD is bound at residue Val-280. A disulfide bridge connects residues Cys-350 and Cys-431. N-linked (GlcNAc...) asparagine glycosylation occurs at Asn-380. Position 391 (Tyr-391) interacts with substrate. Residues Glu-476 and 483–488 (GWLDST) each bind FAD. 483 to 484 (GW) provides a ligand contact to substrate.

It belongs to the flavin monoamine oxidase family. FIG1 subfamily. In terms of assembly, monomer. This is in contrast with most of its orthologs, that are non-covalently linked homodimers. It depends on FAD as a cofactor. N-glycosylated. As to expression, expressed by the venom gland.

It localises to the secreted. It carries out the reaction an L-alpha-amino acid + O2 + H2O = a 2-oxocarboxylate + H2O2 + NH4(+). The enzyme catalyses L-leucine + O2 + H2O = 4-methyl-2-oxopentanoate + H2O2 + NH4(+). It catalyses the reaction L-phenylalanine + O2 + H2O = 3-phenylpyruvate + H2O2 + NH4(+). The catalysed reaction is L-tryptophan + O2 + H2O = indole-3-pyruvate + H2O2 + NH4(+). It carries out the reaction L-methionine + O2 + H2O = 4-methylsulfanyl-2-oxobutanoate + H2O2 + NH4(+). The enzyme catalyses L-isoleucine + O2 + H2O = (S)-3-methyl-2-oxopentanoate + H2O2 + NH4(+). It catalyses the reaction L-arginine + O2 + H2O = 5-guanidino-2-oxopentanoate + H2O2 + NH4(+). The catalysed reaction is L-aspartate + O2 + H2O = oxaloacetate + H2O2 + NH4(+). It carries out the reaction L-histidine + O2 + H2O = 3-(imidazol-5-yl)pyruvate + H2O2 + NH4(+). The enzyme catalyses L-asparagine + O2 + H2O = 2-oxosuccinamate + H2O2 + NH4(+). It catalyses the reaction L-tyrosine + O2 + H2O = 3-(4-hydroxyphenyl)pyruvate + H2O2 + NH4(+). The catalysed reaction is L-glutamine + O2 + H2O = 2-oxoglutaramate + H2O2 + NH4(+). It carries out the reaction L-alanine + O2 + H2O = pyruvate + H2O2 + NH4(+). The enzyme catalyses L-lysine + O2 + H2O = 6-amino-2-oxohexanoate + H2O2 + NH4(+). It catalyses the reaction L-glutamate + O2 + H2O = H2O2 + 2-oxoglutarate + NH4(+). Its function is as follows. Catalyzes an oxidative deamination of predominantly hydrophobic and aromatic L-amino acids, thus producing hydrogen peroxide that may contribute to the diverse toxic effects of this enzyme. Is highly active against L-Tyr, L-Asp, L-Phe, L-Glu, L-Trp, L-His, L-Gln, L-Ile, L-Met, L-Leu and moderately active against L-Lys, L-Arg, L-Ala and L-Asn. Exhibits diverse biological activities, such as edema, inflammatory cell infiltration, cytotoxicity and apoptosis, as well as induction of platelet aggregation. Effects of snake L-amino oxidases on platelets are controversial, since they either induce aggregation or inhibit agonist-induced aggregation. These different effects are probably due to different experimental conditions. This protein may also induce hemorrhage, hemolysis, and have antibacterial and antiparasitic activities. The chain is L-amino-acid oxidase from Bungarus fasciatus (Banded krait).